We begin with the raw amino-acid sequence, 97 residues long: Large ribosomal subunit protein eL21 (97 aa).

The protein belongs to the eukaryotic ribosomal protein eL21 family.

The sequence is that of Large ribosomal subunit protein eL21 from Methanosarcina mazei (strain ATCC BAA-159 / DSM 3647 / Goe1 / Go1 / JCM 11833 / OCM 88) (Methanosarcina frisia).